A 190-amino-acid polypeptide reads, in one-letter code: Cytidylate kinase (190 aa).

7–15 (GKIGSGKST) contacts ATP.

This sequence belongs to the cytidylate kinase family. Type 2 subfamily.

Its subcellular location is the cytoplasm. The enzyme catalyses CMP + ATP = CDP + ADP. It carries out the reaction dCMP + ATP = dCDP + ADP. The sequence is that of Cytidylate kinase from Thermoplasma volcanium (strain ATCC 51530 / DSM 4299 / JCM 9571 / NBRC 15438 / GSS1).